Consider the following 460-residue polypeptide: Protein Peter pan (460 aa).

Positions 28 to 290 constitute a Brix domain; it reads PHSFVIHRGL…LIKIEEGLLT (263 aa). 2 positions are modified to phosphoserine: Ser-237 and Ser-239. Positions 295 to 350 form a coiled coil; sequence YHDHVVKTEDEKETLRKLVEKKRKQKEQRKKEQAENRARNLKLKKDEKWAAKRAAE. Residues 315-460 form a disordered region; sequence KKRKQKEQRK…FDHRKSRKSK (146 aa). Composition is skewed to basic and acidic residues over residues 323–355 and 401–446; these read RKKEQAENRARNLKLKKDEKWAAKRAAEGRTDS and AKLD…DPKN. Thr-353 carries the phosphothreonine modification. Ser-355 carries the phosphoserine modification. Residues 447 to 460 are compositionally biased toward basic residues; sequence KRAKFDHRKSRKSK.

The protein belongs to the PPAN family. Ubiquitous.

Functionally, required for initiation of larval growth and normal mitotic growth but is not absolutely required for general biosynthesis or DNA replication. Required for progression of normal oogenesis and maturation of some imaginal tissues into adult structures. This is Protein Peter pan (ppan) from Drosophila melanogaster (Fruit fly).